The primary structure comprises 203 residues: High frequency lysogenization protein HflD homolog (203 aa).

Belongs to the HflD family.

Its subcellular location is the cytoplasm. The protein resides in the cell inner membrane. The sequence is that of High frequency lysogenization protein HflD homolog from Dichelobacter nodosus (strain VCS1703A).